Consider the following 345-residue polypeptide: 4-hydroxythreonine-4-phosphate dehydrogenase (345 aa).

Substrate-binding residues include H148 and T149. The a divalent metal cation site is built by H182, H227, and H282. Substrate contacts are provided by K290, N299, and R308.

This sequence belongs to the PdxA family. Homodimer. Zn(2+) is required as a cofactor. Requires Mg(2+) as cofactor. The cofactor is Co(2+).

It is found in the cytoplasm. The enzyme catalyses 4-(phosphooxy)-L-threonine + NAD(+) = 3-amino-2-oxopropyl phosphate + CO2 + NADH. The protein operates within cofactor biosynthesis; pyridoxine 5'-phosphate biosynthesis; pyridoxine 5'-phosphate from D-erythrose 4-phosphate: step 4/5. Functionally, catalyzes the NAD(P)-dependent oxidation of 4-(phosphooxy)-L-threonine (HTP) into 2-amino-3-oxo-4-(phosphooxy)butyric acid which spontaneously decarboxylates to form 3-amino-2-oxopropyl phosphate (AHAP). The protein is 4-hydroxythreonine-4-phosphate dehydrogenase of Bradyrhizobium diazoefficiens (strain JCM 10833 / BCRC 13528 / IAM 13628 / NBRC 14792 / USDA 110).